The chain runs to 325 residues: 4-hydroxy-3-methylbut-2-enyl diphosphate reductase (325 aa).

C13 lines the [4Fe-4S] cluster pocket. Positions 42 and 76 each coordinate (2E)-4-hydroxy-3-methylbut-2-enyl diphosphate. Positions 42 and 76 each coordinate dimethylallyl diphosphate. 2 residues coordinate isopentenyl diphosphate: H42 and H76. C98 is a binding site for [4Fe-4S] cluster. H126 serves as a coordination point for (2E)-4-hydroxy-3-methylbut-2-enyl diphosphate. Residue H126 coordinates dimethylallyl diphosphate. H126 contacts isopentenyl diphosphate. E128 functions as the Proton donor in the catalytic mechanism. A (2E)-4-hydroxy-3-methylbut-2-enyl diphosphate-binding site is contributed by T169. C230 provides a ligand contact to [4Fe-4S] cluster. 4 residues coordinate (2E)-4-hydroxy-3-methylbut-2-enyl diphosphate: S258, S259, N260, and S306. Residues S258, S259, N260, and S306 each coordinate dimethylallyl diphosphate. Isopentenyl diphosphate contacts are provided by S258, S259, N260, and S306.

Belongs to the IspH family. The cofactor is [4Fe-4S] cluster.

The enzyme catalyses isopentenyl diphosphate + 2 oxidized [2Fe-2S]-[ferredoxin] + H2O = (2E)-4-hydroxy-3-methylbut-2-enyl diphosphate + 2 reduced [2Fe-2S]-[ferredoxin] + 2 H(+). It catalyses the reaction dimethylallyl diphosphate + 2 oxidized [2Fe-2S]-[ferredoxin] + H2O = (2E)-4-hydroxy-3-methylbut-2-enyl diphosphate + 2 reduced [2Fe-2S]-[ferredoxin] + 2 H(+). The protein operates within isoprenoid biosynthesis; dimethylallyl diphosphate biosynthesis; dimethylallyl diphosphate from (2E)-4-hydroxy-3-methylbutenyl diphosphate: step 1/1. It participates in isoprenoid biosynthesis; isopentenyl diphosphate biosynthesis via DXP pathway; isopentenyl diphosphate from 1-deoxy-D-xylulose 5-phosphate: step 6/6. Catalyzes the conversion of 1-hydroxy-2-methyl-2-(E)-butenyl 4-diphosphate (HMBPP) into a mixture of isopentenyl diphosphate (IPP) and dimethylallyl diphosphate (DMAPP). Acts in the terminal step of the DOXP/MEP pathway for isoprenoid precursor biosynthesis. This is 4-hydroxy-3-methylbut-2-enyl diphosphate reductase from Chlorobium phaeobacteroides (strain BS1).